Consider the following 495-residue polypeptide: Ribosomal protein uS12 methylthiotransferase RimO (495 aa).

Positions 5–121 (RTVALVTLGC…ISDRLQTILN (117 aa)) constitute an MTTase N-terminal domain. The [4Fe-4S] cluster site is built by Cys-14, Cys-50, and Cys-84. The disordered stretch occupies residues 145 to 183 (QSAGADVALPGHGAPEGLPEDLPEGLAPESGPRAPLRRR). The Radical SAM core domain occupies 184–415 (LDGSPVASVK…RLAEELVAQR (232 aa)). Positions 198, 202, and 205 each coordinate [4Fe-4S] cluster. One can recognise a TRAM domain in the interval 417–484 (EERVGETVHV…GVDLVAEPLP (68 aa)).

Belongs to the methylthiotransferase family. RimO subfamily. [4Fe-4S] cluster serves as cofactor.

It localises to the cytoplasm. The catalysed reaction is L-aspartate(89)-[ribosomal protein uS12]-hydrogen + (sulfur carrier)-SH + AH2 + 2 S-adenosyl-L-methionine = 3-methylsulfanyl-L-aspartate(89)-[ribosomal protein uS12]-hydrogen + (sulfur carrier)-H + 5'-deoxyadenosine + L-methionine + A + S-adenosyl-L-homocysteine + 2 H(+). In terms of biological role, catalyzes the methylthiolation of an aspartic acid residue of ribosomal protein uS12. The chain is Ribosomal protein uS12 methylthiotransferase RimO from Streptomyces avermitilis (strain ATCC 31267 / DSM 46492 / JCM 5070 / NBRC 14893 / NCIMB 12804 / NRRL 8165 / MA-4680).